The chain runs to 478 residues: Leukotoxin secretion protein D (478 aa).

At 1–77 the chain is on the cytoplasmic side; it reads MKIWLSGIYE…LAVAIVLASV (77 aa). A helical transmembrane segment spans residues 78–98; the sequence is SKVEIVATAPGKLTFSGRSKE. At 99-478 the chain is on the periplasmic side; sequence IKPIENTIVQ…ESVTESLRER (380 aa).

Belongs to the membrane fusion protein (MFP) (TC 8.A.1) family.

It is found in the cell inner membrane. In terms of biological role, involved in the transport of the Leukotoxin. The protein is Leukotoxin secretion protein D (lktD) of Pasteurella haemolytica-like sp. (strain 5943B).